A 424-amino-acid chain; its full sequence is O-methyltransferase aunD (424 aa).

Residue Asp275 coordinates S-adenosyl-L-methionine. His326 serves as the catalytic Proton acceptor.

The protein belongs to the class I-like SAM-binding methyltransferase superfamily. Cation-independent O-methyltransferase family.

The protein operates within secondary metabolite biosynthesis. O-methyltransferase; part of the gene cluster that mediates the biosynthesis of aurasperone B, a dimeric gamma-naphthopyrone. The first step in the biosynthesis of aurasperone B is the production of gamma-naphthopyrone precursor YWA1 by the non-reducing polyketide synthase albA, via condensation of one acetyl-CoA starter unit with 6 malonyl-CoA units. YWA1 is then methylated by aunE at position C-6 to yield foncesin which is further methylated at position C-8 by aunD to produce fonsecin B. A key enzyme in the biosynthetic pathway is the cytochrome P450 monooxygenase aunB which catalyzes the oxidative dimerization of fonsecin B to aurasperone B. AunB also catalyzes the oxidative dimerization of rubrofusarin B into aurasperone A. The protein is O-methyltransferase aunD of Aspergillus niger (strain ATCC MYA-4892 / CBS 513.88 / FGSC A1513).